Consider the following 546-residue polypeptide: MFS-type transporter GME11371 (546 aa).

The next 7 helical transmembrane spans lie at 39-59 (LTYL…DLTI), 77-96 (IGWY…SSWG), 107-127 (MFLL…AAPT), 137-157 (ITGI…AFAV), 167-187 (GGLA…GGVL), 195-215 (WCFY…FLFF), and 240-260 (FPGF…LLWG). An N-linked (GlcNAc...) asparagine glycan is attached at Asn267. A run of 7 helical transmembrane segments spans residues 270 to 290 (DVIG…VVEW), 307 to 327 (VVLF…VLVY), 349 to 369 (LPYI…ISAT), 370 to 390 (GYFT…AGLI), 402 to 422 (WIGY…PPIL), 433 to 453 (VAAT…FMVS), and 509 to 529 (ISFA…IFMP).

This sequence belongs to the major facilitator superfamily.

The protein localises to the cell membrane. It functions in the pathway secondary metabolite biosynthesis. Its function is as follows. MFS-type transporter; part of the gene cluster that mediates the biosynthesis of dibenzodioxocinones such as pestalotiollide B, a novel class of inhibitors against cholesterol ester transfer protein (CEPT). essential for dibenzodioxocinones biosynthesis and may be involved in the secretion of the cluster products. The sequence is that of MFS-type transporter GME11371 from Pestalotiopsis microspora.